A 592-amino-acid polypeptide reads, in one-letter code: Isocitrate dehydrogenase kinase/phosphatase 1 (592 aa).

ATP is bound by residues 337-343 (APGTPGM) and Lys358. Residue Asp393 is part of the active site.

The protein belongs to the AceK family.

It localises to the cytoplasm. It catalyses the reaction L-seryl-[isocitrate dehydrogenase] + ATP = O-phospho-L-seryl-[isocitrate dehydrogenase] + ADP + H(+). Functionally, bifunctional enzyme which can phosphorylate or dephosphorylate isocitrate dehydrogenase (IDH) on a specific serine residue. This is a regulatory mechanism which enables bacteria to bypass the Krebs cycle via the glyoxylate shunt in response to the source of carbon. When bacteria are grown on glucose, IDH is fully active and unphosphorylated, but when grown on acetate or ethanol, the activity of IDH declines drastically concomitant with its phosphorylation. The sequence is that of Isocitrate dehydrogenase kinase/phosphatase 1 from Pseudoalteromonas translucida (strain TAC 125).